The chain runs to 311 residues: Meteorin-like protein (311 aa).

The span at Met1–Gly13 shows a compositional bias: low complexity. Residues Met1–Pro24 are disordered. The signal sequence occupies residues Met1–Ala45. Intrachain disulfides connect Cys52/Cys75, Cys107/Cys143, Cys188/Cys260, Cys191/Cys284, and Cys201/Cys306.

Belongs to the meteorin family. Highly expressed in the skeletal muscle, in subcutaneous adipose tissue, epididymal white adipose tissue depots and heart. Also expressed in brown adipose tissues and kidney.

It localises to the secreted. Functionally, hormone induced following exercise or cold exposure that promotes energy expenditure. Induced either in the skeletal muscle after exercise or in adipose tissue following cold exposure and is present in the circulation. Able to stimulate energy expenditure associated with the browning of the white fat depots and improves glucose tolerance. Does not promote an increase in a thermogenic gene program via direct action on adipocytes, but acts by stimulating several immune cell subtypes to enter the adipose tissue and activate their prothermogenic actions. Stimulates an eosinophil-dependent increase in IL4 expression and promotes alternative activation of adipose tissue macrophages, which are required for the increased expression of the thermogenic and anti-inflammatory gene programs in fat. Required for some cold-induced thermogenic responses, suggesting a role in metabolic adaptations to cold temperatures. The chain is Meteorin-like protein (METRNL) from Homo sapiens (Human).